The chain runs to 71 residues: UPF0435 protein RBAM_008100 (71 aa).

The protein belongs to the UPF0435 family.

This is UPF0435 protein RBAM_008100 from Bacillus velezensis (strain DSM 23117 / BGSC 10A6 / LMG 26770 / FZB42) (Bacillus amyloliquefaciens subsp. plantarum).